The following is a 214-amino-acid chain: Outer-membrane lipoprotein LolB (214 aa).

Residues 1–25 (MNNLKRFTKSIFSCIALSGLLFLGG) form the signal peptide. C26 carries the N-palmitoyl cysteine lipid modification. A lipid anchor (S-diacylglycerol cysteine) is attached at C26.

This sequence belongs to the LolB family. As to quaternary structure, monomer.

The protein resides in the cell outer membrane. In terms of biological role, plays a critical role in the incorporation of lipoproteins in the outer membrane after they are released by the LolA protein. The sequence is that of Outer-membrane lipoprotein LolB from Shewanella sp. (strain MR-7).